Reading from the N-terminus, the 116-residue chain is Protein lin-52 homolog (116 aa).

Serine 28 and serine 53 each carry phosphoserine.

Belongs to the lin-52 family. In terms of assembly, component of the DREAM complex (also named LINC complex) at least composed of E2F4, E2F5, LIN9, LIN37, LIN52, LIN54, MYBL1, MYBL2, RBL1, RBL2, RBBP4, TFDP1 and TFDP2. The complex exists in quiescent cells where it represses cell cycle-dependent genes. It dissociates in S phase when LIN9, LIN37, LIN52 and LIN54 form a subcomplex that binds to MYBL2.

In Homo sapiens (Human), this protein is Protein lin-52 homolog (LIN52).